We begin with the raw amino-acid sequence, 254 residues long: Claudin-16 (254 aa).

The Cytoplasmic portion of the chain corresponds to 1–22; sequence MGPGLAASHVSFPDSLLAKMRD. Residues 23-43 traverse the membrane as a helical segment; the sequence is LLQYVACFFAFFSAGFLVVAT. Residues 44-98 are Extracellular-facing; the sequence is WTDCWMVNADDSLEVSTKCRGLWWECVTNAFDGIRTCDEYDSILAEHSLKLVVTR. A helical transmembrane segment spans residues 99–119; sequence ALMITADILAGFGFITLLLGL. The Cytoplasmic portion of the chain corresponds to 120 to 134; it reads DCVKFLPDEPYIKVR. A helical membrane pass occupies residues 135–155; sequence ISFVAGTTLLIAGAPGIIGSV. Over 156–188 the chain is Extracellular; that stretch reads WYAVDVYVERSSLVLHNIFLGIQYKFGWSCWLG. The helical transmembrane segment at 189 to 209 threads the bilayer; it reads MAGSLGCFLAGAILTCCLYLF. Residues 210–254 are Cytoplasmic-facing; it reads KDVGPERSYPYSTRKAYSTTAVSMPRSHAIPRTQTAKMYAVDTRV. The Interaction with TJP1 signature appears at 252 to 254; the sequence is TRV.

Belongs to the claudin family. Can form heteropolymeric tight junction strands with other claudins. Interacts with CLDN19. Interacts (via PDZ-binding motif TRV) with TJP1 (via PDZ domain). Cannot form tight junction strands on its own. As to expression, expressed preferentially in kidney.

The protein resides in the cell junction. The protein localises to the tight junction. It is found in the cell membrane. The enzyme catalyses Mg(2+)(in) = Mg(2+)(out). It catalyses the reaction Ca(2+)(in) = Ca(2+)(out). It carries out the reaction Na(+)(in) = Na(+)(out). The catalysed reaction is K(+)(in) = K(+)(out). The enzyme catalyses Rb(+)(in) = Rb(+)(out). It catalyses the reaction Cs(+)(in) = Cs(+)(out). It carries out the reaction Li(+)(in) = Li(+)(out). Its function is as follows. Forms paracellular channels: coassembles with CLDN19 into tight junction strands with cation-selective channels through the strands, conveying epithelial permeability in a process known as paracellular tight junction permeability. Involved in the maintenance of ion gradients along the nephron. In the thick ascending limb (TAL) of Henle's loop, facilitates sodium paracellular permeability from the interstitial compartment to the lumen, contributing to the lumen-positive transepithelial potential that drives paracellular magnesium and calcium reabsorption. In Bos taurus (Bovine), this protein is Claudin-16 (CLDN16).